A 151-amino-acid polypeptide reads, in one-letter code: Copper transporter 2 (151 aa).

A run of 2 helical transmembrane segments spans residues 42–62 and 97–117; these read GARGGMYALAILFMFALAVLL and VAYLIMLALMSFNGGVFLAIV.

The protein belongs to the copper transporter (Ctr) (TC 1.A.56) family. SLC31A subfamily. In terms of assembly, self-interacts. Interacts with SWEET11 and COPT1.

Its subcellular location is the cell membrane. In terms of biological role, involved in the transport of copper, in cooperation with SWEET11 and COPT1. Contributes to the removal of copper (Cu) from xylem, and thus to the sensitivity toward bacterial pathogens such as X.oryzae pv. oryzae (Xoo). In Oryza sativa subsp. japonica (Rice), this protein is Copper transporter 2 (COPT2).